The chain runs to 312 residues: tRNA dimethylallyltransferase (312 aa).

ATP is bound at residue 11-18; sequence GLTATGKT. 13–18 lines the substrate pocket; the sequence is TATGKT. The segment at 36 to 39 is interaction with substrate tRNA; the sequence is DSMC.

Belongs to the IPP transferase family. In terms of assembly, monomer. It depends on Mg(2+) as a cofactor.

The catalysed reaction is adenosine(37) in tRNA + dimethylallyl diphosphate = N(6)-dimethylallyladenosine(37) in tRNA + diphosphate. Its function is as follows. Catalyzes the transfer of a dimethylallyl group onto the adenine at position 37 in tRNAs that read codons beginning with uridine, leading to the formation of N6-(dimethylallyl)adenosine (i(6)A). This chain is tRNA dimethylallyltransferase, found in Caldicellulosiruptor saccharolyticus (strain ATCC 43494 / DSM 8903 / Tp8T 6331).